We begin with the raw amino-acid sequence, 343 residues long: Anthranilate phosphoribosyltransferase (343 aa).

Residues Gly84, 87–88 (GD), Thr92, 94–97 (NIST), 112–120 (KHGNRGVSS), and Ser124 each bind 5-phospho-alpha-D-ribose 1-diphosphate. Gly84 is a binding site for anthranilate. Ser96 contacts Mg(2+). Asn115 is a binding site for anthranilate. Arg170 lines the anthranilate pocket. Positions 229 and 230 each coordinate Mg(2+).

Belongs to the anthranilate phosphoribosyltransferase family. As to quaternary structure, homodimer. Mg(2+) serves as cofactor.

It carries out the reaction N-(5-phospho-beta-D-ribosyl)anthranilate + diphosphate = 5-phospho-alpha-D-ribose 1-diphosphate + anthranilate. It participates in amino-acid biosynthesis; L-tryptophan biosynthesis; L-tryptophan from chorismate: step 2/5. Its function is as follows. Catalyzes the transfer of the phosphoribosyl group of 5-phosphorylribose-1-pyrophosphate (PRPP) to anthranilate to yield N-(5'-phosphoribosyl)-anthranilate (PRA). The polypeptide is Anthranilate phosphoribosyltransferase (Burkholderia vietnamiensis (strain G4 / LMG 22486) (Burkholderia cepacia (strain R1808))).